The chain runs to 290 residues: D-tagatose-1,6-bisphosphate aldolase subunit KbaY (290 aa).

The active-site Proton donor is Asp-82. Positions 83 and 180 each coordinate Zn(2+). Gly-181 serves as a coordination point for dihydroxyacetone phosphate. Residue His-208 participates in Zn(2+) binding. Dihydroxyacetone phosphate is bound by residues 209–211 (GAS) and 230–233 (NVAT).

The protein belongs to the class II fructose-bisphosphate aldolase family. TagBP aldolase KbaY subfamily. In terms of assembly, homotetramer. Forms a complex with KbaZ. Requires Zn(2+) as cofactor.

It catalyses the reaction D-tagatofuranose 1,6-bisphosphate = D-glyceraldehyde 3-phosphate + dihydroxyacetone phosphate. It participates in carbohydrate metabolism; D-tagatose 6-phosphate degradation; D-glyceraldehyde 3-phosphate and glycerone phosphate from D-tagatose 6-phosphate: step 2/2. Functionally, catalytic subunit of the tagatose-1,6-bisphosphate aldolase KbaYZ, which catalyzes the reversible aldol condensation of dihydroxyacetone phosphate (DHAP or glycerone-phosphate) with glyceraldehyde 3-phosphate (G3P) to produce tagatose 1,6-bisphosphate (TBP). Requires KbaZ subunit for full activity and stability. The sequence is that of D-tagatose-1,6-bisphosphate aldolase subunit KbaY from Citrobacter koseri (strain ATCC BAA-895 / CDC 4225-83 / SGSC4696).